Reading from the N-terminus, the 92-residue chain is Small ribosomal subunit protein uS15c (92 aa).

It belongs to the universal ribosomal protein uS15 family. In terms of assembly, part of the 30S ribosomal subunit.

It localises to the plastid. The protein resides in the chloroplast. The chain is Small ribosomal subunit protein uS15c (rps15) from Guizotia abyssinica (Niger).